Here is a 48-residue protein sequence, read N- to C-terminus: Large ribosomal subunit protein bL33A (48 aa).

Belongs to the bacterial ribosomal protein bL33 family.

The polypeptide is Large ribosomal subunit protein bL33A (Streptococcus agalactiae serotype V (strain ATCC BAA-611 / 2603 V/R)).